We begin with the raw amino-acid sequence, 629 residues long: tRNA uridine 5-carboxymethylaminomethyl modification enzyme MnmG (629 aa).

An FAD-binding site is contributed by 11–16 (GGGHAG). 273–287 (GPRYCPSFEDKAVRF) serves as a coordination point for NAD(+).

The protein belongs to the MnmG family. As to quaternary structure, homodimer. Heterotetramer of two MnmE and two MnmG subunits. The cofactor is FAD.

Its subcellular location is the cytoplasm. Its function is as follows. NAD-binding protein involved in the addition of a carboxymethylaminomethyl (cmnm) group at the wobble position (U34) of certain tRNAs, forming tRNA-cmnm(5)s(2)U34. In Mycoplasma mycoides subsp. mycoides SC (strain CCUG 32753 / NCTC 10114 / PG1), this protein is tRNA uridine 5-carboxymethylaminomethyl modification enzyme MnmG.